Reading from the N-terminus, the 558-residue chain is Arginine--tRNA ligase (558 aa).

The short motif at 119-129 is the 'HIGH' region element; that stretch reads PNIAKPMSMGH.

Belongs to the class-I aminoacyl-tRNA synthetase family. As to quaternary structure, monomer.

The protein localises to the cytoplasm. It carries out the reaction tRNA(Arg) + L-arginine + ATP = L-arginyl-tRNA(Arg) + AMP + diphosphate. In Lactobacillus johnsonii (strain CNCM I-12250 / La1 / NCC 533), this protein is Arginine--tRNA ligase.